The sequence spans 448 residues: Exodeoxyribonuclease 7 large subunit (448 aa).

The protein belongs to the XseA family. As to quaternary structure, heterooligomer composed of large and small subunits.

It is found in the cytoplasm. The enzyme catalyses Exonucleolytic cleavage in either 5'- to 3'- or 3'- to 5'-direction to yield nucleoside 5'-phosphates.. In terms of biological role, bidirectionally degrades single-stranded DNA into large acid-insoluble oligonucleotides, which are then degraded further into small acid-soluble oligonucleotides. The chain is Exodeoxyribonuclease 7 large subunit from Shewanella baltica (strain OS195).